The primary structure comprises 469 residues: Septin homolog spn1 (469 aa).

Residues 1–58 form a disordered region; that stretch reads MASMVLADGMPTVKDDSTRSRGSDVDSFTSTDNVTQINVEAAISENKNEEKPIQDNSE. Residues 13–24 show a composition bias toward basic and acidic residues; that stretch reads VKDDSTRSRGSD. Polar residues predominate over residues 26-38; it reads DSFTSTDNVTQIN. One can recognise a Septin-type G domain in the interval 92-367; it reads QGFNFNVLVL…EAYRTERLLS (276 aa). Positions 102–109 are G1 motif; that stretch reads GESGSGKS. GTP-binding positions include 102–109, threonine 139, glycine 165, 244–252, and arginine 317; these read GESGSGKS and KADTLTDDE. The segment at 162 to 165 is G3 motif; the sequence is DTPG. The tract at residues 243-246 is G4 motif; the sequence is AKAD. Residues 383 to 469 adopt a coiled-coil conformation; that stretch reads SAKLEEERAL…NEKSKRKFFK (87 aa).

Belongs to the TRAFAC class TrmE-Era-EngA-EngB-Septin-like GTPase superfamily. Septin GTPase family. As to quaternary structure, component of the septin complex composed of two copies of each spn1, spn2, spn3 and spn4.

The protein resides in the cytoplasm. Its subcellular location is the cell cortex. Functionally, plays a role in the cell cycle. Involved in a late stage of septum formation leading to the separation of the daughter cells. The sequence is that of Septin homolog spn1 (spn1) from Schizosaccharomyces pombe (strain 972 / ATCC 24843) (Fission yeast).